A 1885-amino-acid chain; its full sequence is Chitin synthase 5 (1885 aa).

A Myosin motor domain is found at 1–789 (MATRGNVPAH…SIALTGSQAA (789 aa)). 99–106 (GESGSGKT) is an ATP binding site. N-linked (GlcNAc...) asparagine glycans are attached at residues N219 and N429. The tract at residues 601–649 (KPLRMPSVSRKKHDQLRRMASRRADRSPAPQEEEPLPGTEEAKVRRTKP) is disordered. Over residues 609–621 (SRKKHDQLRRMAS) the composition is skewed to basic residues. The actin-binding stretch occupies residues 666–690 (LDNITKSLTAPNVNNYFVFCLKPND). N668 carries an N-linked (GlcNAc...) asparagine glycan. Residues 794–817 (GDIGSPSRPDTPGHNPFSDSKARL) form a disordered region. The next 2 helical transmembrane spans lie at 894–914 (WLAI…KWIG) and 929–949 (FAIN…IIVF). Residues 957 to 1016 (QNVYSAAELSAHDGKGKHSAYVAIRGQVFDLGAFMPNHYPKIIPQSSLKKYAGVDATGLF) form the Cytochrome b5 heme-binding domain. N-linked (GlcNAc...) asparagine glycosylation is found at N1043 and N1068. A helical membrane pass occupies residues 1205–1225 (ILLAVSILLCSVIGFKFFAAL). N-linked (GlcNAc...) asparagine glycosylation is found at N1462 and N1568. 3 helical membrane-spanning segments follow: residues 1599 to 1619 (LLST…IVLL), 1626 to 1646 (VPLT…IIFI), and 1653 to 1673 (MIGW…GLPL). Residues N1759 and N1790 are each glycosylated (N-linked (GlcNAc...) asparagine). One can recognise a DEK-C domain in the interval 1827-1882 (LPTDDMLLNEIRDILRTADLMTVTKKGIKQELERRFNVNLDMKRAYIGSATEAILS).

In the N-terminal section; belongs to the TRAFAC class myosin-kinesin ATPase superfamily. Myosin family. It in the C-terminal section; belongs to the chitin synthase family. Class V subfamily. Maximal activity requires trypsin activation, suggesting a zymogenic nature.

Its subcellular location is the cell membrane. It localises to the membrane. It catalyses the reaction [(1-&gt;4)-N-acetyl-beta-D-glucosaminyl](n) + UDP-N-acetyl-alpha-D-glucosamine = [(1-&gt;4)-N-acetyl-beta-D-glucosaminyl](n+1) + UDP + H(+). Functionally, polymerizes chitin, a structural polymer of the cell wall and septum, by transferring the sugar moiety of UDP-GlcNAc to the non-reducing end of the growing chitin polymer. CHS5 is required for the sustained growth at 37 degrees Celsius and is of critical importance for virulence. Especially important at infection temperatures for maintaining the cell wall integrity of developing yeast buds, elongating tips of hyphae, and random sites of expansion in sclerotic forms. The polypeptide is Chitin synthase 5 (Exophiala dermatitidis (Black yeast-like fungus)).